A 317-amino-acid polypeptide reads, in one-letter code: Ribosomal protein L11 methyltransferase (317 aa).

Positions 158, 179, 201, and 244 each coordinate S-adenosyl-L-methionine.

This sequence belongs to the methyltransferase superfamily. PrmA family.

The protein localises to the cytoplasm. The enzyme catalyses L-lysyl-[protein] + 3 S-adenosyl-L-methionine = N(6),N(6),N(6)-trimethyl-L-lysyl-[protein] + 3 S-adenosyl-L-homocysteine + 3 H(+). Its function is as follows. Methylates ribosomal protein L11. This chain is Ribosomal protein L11 methyltransferase, found in Streptococcus mutans serotype c (strain ATCC 700610 / UA159).